Consider the following 345-residue polypeptide: S-adenosylmethionine:tRNA ribosyltransferase-isomerase (345 aa).

The protein belongs to the QueA family. As to quaternary structure, monomer.

It is found in the cytoplasm. The enzyme catalyses 7-aminomethyl-7-carbaguanosine(34) in tRNA + S-adenosyl-L-methionine = epoxyqueuosine(34) in tRNA + adenine + L-methionine + 2 H(+). The protein operates within tRNA modification; tRNA-queuosine biosynthesis. Transfers and isomerizes the ribose moiety from AdoMet to the 7-aminomethyl group of 7-deazaguanine (preQ1-tRNA) to give epoxyqueuosine (oQ-tRNA). The protein is S-adenosylmethionine:tRNA ribosyltransferase-isomerase of Shewanella sp. (strain ANA-3).